A 148-amino-acid chain; its full sequence is Snaclec jerdonuxin subunit beta (148 aa).

Positions methionine 1–alanine 23 are cleaved as a signal peptide. 3 cysteine pairs are disulfide-bonded: cysteine 27–cysteine 38, cysteine 55–cysteine 144, and cysteine 121–cysteine 136. A C-type lectin domain is found at tyrosine 34–lysine 145.

It belongs to the snaclec family. Tetramer of 4 heterodimers of alpha and beta subunits; disulfide-linked. Expressed by the venom gland.

It is found in the secreted. Its function is as follows. Snaclec that strongly induces platelet aggregation, in a dose-dependent manner. The polypeptide is Snaclec jerdonuxin subunit beta (Protobothrops jerdonii (Jerdon's pitviper)).